We begin with the raw amino-acid sequence, 448 residues long: Methylenetetrahydrofolate--tRNA-(uracil-5-)-methyltransferase TrmFO (448 aa).

Residue G13–G18 coordinates FAD.

This sequence belongs to the MnmG family. TrmFO subfamily. Requires FAD as cofactor.

It localises to the cytoplasm. It catalyses the reaction uridine(54) in tRNA + (6R)-5,10-methylene-5,6,7,8-tetrahydrofolate + NADH + H(+) = 5-methyluridine(54) in tRNA + (6S)-5,6,7,8-tetrahydrofolate + NAD(+). The catalysed reaction is uridine(54) in tRNA + (6R)-5,10-methylene-5,6,7,8-tetrahydrofolate + NADPH + H(+) = 5-methyluridine(54) in tRNA + (6S)-5,6,7,8-tetrahydrofolate + NADP(+). Its function is as follows. Catalyzes the folate-dependent formation of 5-methyl-uridine at position 54 (M-5-U54) in all tRNAs. The polypeptide is Methylenetetrahydrofolate--tRNA-(uracil-5-)-methyltransferase TrmFO (Streptococcus pyogenes serotype M5 (strain Manfredo)).